We begin with the raw amino-acid sequence, 194 residues long: Outer-membrane lipoprotein LolB (194 aa).

The first 18 residues, 1 to 18 (MKLLQHLTLIFCLLILTA), serve as a signal peptide directing secretion. Cys-19 is lipidated: N-palmitoyl cysteine. Cys-19 carries the S-diacylglycerol cysteine lipid modification.

Belongs to the LolB family. Monomer.

It is found in the cell outer membrane. In terms of biological role, plays a critical role in the incorporation of lipoproteins in the outer membrane after they are released by the LolA protein. The chain is Outer-membrane lipoprotein LolB from Tolumonas auensis (strain DSM 9187 / NBRC 110442 / TA 4).